A 497-amino-acid polypeptide reads, in one-letter code: tRNA-2-methylthio-N(6)-dimethylallyladenosine synthase (497 aa).

The tract at residues 1 to 48 (MTGTSNIPTHGKEHKDAPALLPLPAPNTHHTHAAHPGDPSHDRHPSRG) is disordered. Residues 18-28 (PALLPLPAPNT) show a composition bias toward low complexity. In terms of domain architecture, MTTase N-terminal spans 48 to 165 (GKLFIKTHGC…LPDMIRARRE (118 aa)). [4Fe-4S] cluster is bound by residues C57, C94, C128, C202, C206, and C209. In terms of domain architecture, Radical SAM core spans 188 to 430 (RAEGPSAFVS…QKHINAYAAD (243 aa)). The 64-residue stretch at 433 to 496 (KRMIGTVQTV…TNSLRGRVHT (64 aa)) folds into the TRAM domain.

It belongs to the methylthiotransferase family. MiaB subfamily. As to quaternary structure, monomer. [4Fe-4S] cluster serves as cofactor.

It is found in the cytoplasm. It carries out the reaction N(6)-dimethylallyladenosine(37) in tRNA + (sulfur carrier)-SH + AH2 + 2 S-adenosyl-L-methionine = 2-methylsulfanyl-N(6)-dimethylallyladenosine(37) in tRNA + (sulfur carrier)-H + 5'-deoxyadenosine + L-methionine + A + S-adenosyl-L-homocysteine + 2 H(+). Functionally, catalyzes the methylthiolation of N6-(dimethylallyl)adenosine (i(6)A), leading to the formation of 2-methylthio-N6-(dimethylallyl)adenosine (ms(2)i(6)A) at position 37 in tRNAs that read codons beginning with uridine. The protein is tRNA-2-methylthio-N(6)-dimethylallyladenosine synthase of Xylella fastidiosa (strain M23).